The following is a 244-amino-acid chain: S-adenosyl-L-methionine-dependent Diels-Alderase iliD (244 aa).

The protein belongs to the class I-like SAM-binding methyltransferase superfamily. Erg6/SMT family. S-adenosyl-L-methionine serves as cofactor.

The catalysed reaction is 3-[(2E,4E,8S,10E,12Z)-4,8-dimethyltetradeca-2,4,10,12-tetraenoyl]-4-hydroxy-5-(4-hydroxyphenyl)-1,2-dihydropyridin-2-one = ilicicolin H. It functions in the pathway mycotoxin biosynthesis. In terms of biological role, S-adenosyl-l-methionine-dependent Diels-Alderase; part of the gene cluster that mediates the biosynthesis of ilicicolin H, a 4-hydroxy-2-pyridonealkaloid that has potent and broad antifungal activities by inhibiting the mitochondrial respiration chain. IliD catalyzes the Diels-Alder reaction that converts the acyclic 2-pyridone intermediate to 8-epi-ilicicolin H. The biosynthesis of ilicicolin H starts with formation of the tetramic acid by the hybrid PKS-NRPS synthetase iliA with the partnering trans-enoyl reductase iliB since iliA lacks a designated enoylreductase (ER) domain. The cytochrome P450 monooxygenase iliC then catalyzes the ring expansion of the tetramate to the acyclic 2-pyridone. The pericyclase iliD further converts the acyclic 2-pyridone into 8-epi-ilicicolin H. 8-epi-ilicicolin H might then spontaneously convert to ilicicolin H since ilicicolin H is produced in the absence of the epimerase iliE, in contrast to what was observed for the Talaromyces variabilis ilicolin H biosynthetic pathway. This chain is S-adenosyl-L-methionine-dependent Diels-Alderase iliD, found in Neonectria sp. (strain DH2).